Here is a 214-residue protein sequence, read N- to C-terminus: NADH-quinone oxidoreductase subunit C (214 aa).

Belongs to the complex I 30 kDa subunit family. NDH-1 is composed of 14 different subunits. Subunits NuoB, C, D, E, F, and G constitute the peripheral sector of the complex.

It is found in the cell inner membrane. The catalysed reaction is a quinone + NADH + 5 H(+)(in) = a quinol + NAD(+) + 4 H(+)(out). NDH-1 shuttles electrons from NADH, via FMN and iron-sulfur (Fe-S) centers, to quinones in the respiratory chain. The immediate electron acceptor for the enzyme in this species is believed to be ubiquinone. Couples the redox reaction to proton translocation (for every two electrons transferred, four hydrogen ions are translocated across the cytoplasmic membrane), and thus conserves the redox energy in a proton gradient. The sequence is that of NADH-quinone oxidoreductase subunit C from Francisella tularensis subsp. novicida (strain U112).